The chain runs to 122 residues: Large ribosomal subunit protein uL14 (122 aa).

It belongs to the universal ribosomal protein uL14 family. In terms of assembly, part of the 50S ribosomal subunit. Forms a cluster with proteins L3 and L19. In the 70S ribosome, L14 and L19 interact and together make contacts with the 16S rRNA in bridges B5 and B8.

Functionally, binds to 23S rRNA. Forms part of two intersubunit bridges in the 70S ribosome. The polypeptide is Large ribosomal subunit protein uL14 (Chlamydia abortus (strain DSM 27085 / S26/3) (Chlamydophila abortus)).